Consider the following 359-residue polypeptide: Probable C-C chemokine receptor type 3 (359 aa).

Residues 1-38 lie on the Extracellular side of the membrane; it reads MAFNTDEIKTVVESFETTPYEYEWAPPCEKVRIKELGS. A helical membrane pass occupies residues 39–64; sequence WLLPPLYSLVFIIGLLGNMMVVLILI. Residues 65 to 68 lie on the Cytoplasmic side of the membrane; sequence KYRK. A helical membrane pass occupies residues 69-95; that stretch reads LQIMTNIYLFNLAISDLLFLFTVPFWI. Residues 96 to 111 lie on the Extracellular side of the membrane; the sequence is HYVLWNEWGFGHYMCK. An intrachain disulfide couples Cys110 to Cys187. A helical membrane pass occupies residues 112 to 133; sequence MLSGFYYLALYSEIFFIILLTI. Residues 134–150 lie on the Cytoplasmic side of the membrane; the sequence is DRYLAIVHAVFALRART. Residues 151 to 175 traverse the membrane as a helical segment; the sequence is VTFATITSIITWGLAGLAALPEFIF. The Extracellular segment spans residues 176 to 201; it reads HESQDSFGEFSCSPRYPEGEEDSWKR. The chain crosses the membrane as a helical span at residues 202–227; it reads FHALRMNIFGLALPLLIMVICYSGII. Residues 228 to 243 lie on the Cytoplasmic side of the membrane; that stretch reads KTLLRCPNKKKHKAIR. A helical membrane pass occupies residues 244-268; sequence LIFVVMIVFFIFWTPYNLVLLFSAF. The Extracellular portion of the chain corresponds to 269–285; the sequence is HSTFLETSCQQSKHLDL. The chain crosses the membrane as a helical span at residues 286–309; the sequence is AMQVTEVIAYTHCCINPVIYAFVG. At 310-359 the chain is on the cytoplasmic side; that stretch reads ERFRKHLRLFFHRNVAVYLGKYIPFLPGEKMERTSSVSPSTGEQEISVVF.

Belongs to the G-protein coupled receptor 1 family. In terms of tissue distribution, detected in skeletal muscle and in trace amounts in leukocytes.

Its subcellular location is the cell membrane. Receptor for C-C type chemokine. Binds and responds to a variety of chemokines, including CCL11, CCL26, CCL7, CCL13, RANTES(CCL5) and CCL15. Subsequently transduces a signal by increasing the intracellular calcium ions level. In addition acts as a possible functional receptor for NARS1. The sequence is that of Probable C-C chemokine receptor type 3 (Ccr3) from Mus musculus (Mouse).